The primary structure comprises 386 residues: Formate-dependent phosphoribosylglycinamide formyltransferase (386 aa).

Residues 15–16 and glutamate 75 each bind N(1)-(5-phospho-beta-D-ribosyl)glycinamide; that span reads EL. Residues arginine 107, lysine 148, 153–158, 188–191, and glutamate 196 each bind ATP; these read SSGKGQ and EQFI. In terms of domain architecture, ATP-grasp spans 112–301; the sequence is ALAAQQLNLQ…EFELHLRAIV (190 aa). Glutamate 260 and glutamate 272 together coordinate Mg(2+). N(1)-(5-phospho-beta-D-ribosyl)glycinamide-binding positions include aspartate 279, lysine 349, and 356–357; that span reads RR.

This sequence belongs to the PurK/PurT family. In terms of assembly, homodimer.

It carries out the reaction N(1)-(5-phospho-beta-D-ribosyl)glycinamide + formate + ATP = N(2)-formyl-N(1)-(5-phospho-beta-D-ribosyl)glycinamide + ADP + phosphate + H(+). Its pathway is purine metabolism; IMP biosynthesis via de novo pathway; N(2)-formyl-N(1)-(5-phospho-D-ribosyl)glycinamide from N(1)-(5-phospho-D-ribosyl)glycinamide (formate route): step 1/1. Involved in the de novo purine biosynthesis. Catalyzes the transfer of formate to 5-phospho-ribosyl-glycinamide (GAR), producing 5-phospho-ribosyl-N-formylglycinamide (FGAR). Formate is provided by PurU via hydrolysis of 10-formyl-tetrahydrofolate. This Francisella tularensis subsp. tularensis (strain SCHU S4 / Schu 4) protein is Formate-dependent phosphoribosylglycinamide formyltransferase.